The following is a 1080-amino-acid chain: Carbamoyl phosphate synthase large chain (1080 aa).

Residues 1 to 403 form a carboxyphosphate synthetic domain region; that stretch reads MPKRTDLRTI…SLQKAVRGLE (403 aa). The ATP site is built by Arg-129, Arg-169, Gly-175, Gly-176, Glu-208, Val-210, Glu-215, Gly-241, Val-242, His-243, Gln-285, and Glu-299. An ATP-grasp 1 domain is found at 133–328; sequence RVAMQEIGLE…IAKIAAKLAV (196 aa). Residues Gln-285, Glu-299, and Asn-301 each coordinate Mg(2+). Residues Gln-285, Glu-299, and Asn-301 each contribute to the Mn(2+) site. The interval 404–554 is oligomerization domain; it reads TGKVGLEPTG…YSTYEEECEA (151 aa). A carbamoyl phosphate synthetic domain region spans residues 555–942; sequence APSDRRKIMI…AFARAQEAGD (388 aa). The region spanning 679–876 is the ATP-grasp 2 domain; the sequence is QKLVQQLGLR…LAKIAARCMT (198 aa). ATP-binding residues include Arg-715, Arg-754, Leu-756, Glu-761, Gly-787, Val-788, His-789, Ser-790, Gln-830, and Glu-847. Residues Gln-830, Glu-847, and Asn-849 each coordinate Mg(2+). Mn(2+) is bound by residues Gln-830, Glu-847, and Asn-849. Positions 943-1080 constitute an MGS-like domain; that stretch reads IRAPQPGRAF…LQELHKELQV (138 aa). Positions 943–1080 are allosteric domain; that stretch reads IRAPQPGRAF…LQELHKELQV (138 aa).

Belongs to the CarB family. Composed of two chains; the small (or glutamine) chain promotes the hydrolysis of glutamine to ammonia, which is used by the large (or ammonia) chain to synthesize carbamoyl phosphate. Tetramer of heterodimers (alpha,beta)4. It depends on Mg(2+) as a cofactor. Mn(2+) is required as a cofactor.

It catalyses the reaction hydrogencarbonate + L-glutamine + 2 ATP + H2O = carbamoyl phosphate + L-glutamate + 2 ADP + phosphate + 2 H(+). The catalysed reaction is hydrogencarbonate + NH4(+) + 2 ATP = carbamoyl phosphate + 2 ADP + phosphate + 2 H(+). It participates in amino-acid biosynthesis; L-arginine biosynthesis; carbamoyl phosphate from bicarbonate: step 1/1. Its pathway is pyrimidine metabolism; UMP biosynthesis via de novo pathway; (S)-dihydroorotate from bicarbonate: step 1/3. Large subunit of the glutamine-dependent carbamoyl phosphate synthetase (CPSase). CPSase catalyzes the formation of carbamoyl phosphate from the ammonia moiety of glutamine, carbonate, and phosphate donated by ATP, constituting the first step of 2 biosynthetic pathways, one leading to arginine and/or urea and the other to pyrimidine nucleotides. The large subunit (synthetase) binds the substrates ammonia (free or transferred from glutamine from the small subunit), hydrogencarbonate and ATP and carries out an ATP-coupled ligase reaction, activating hydrogencarbonate by forming carboxy phosphate which reacts with ammonia to form carbamoyl phosphate. This Xylella fastidiosa (strain 9a5c) protein is Carbamoyl phosphate synthase large chain.